The sequence spans 185 residues: uncharacterized protein (185 aa).

The protein belongs to the PIGL family.

This is an uncharacterized protein from Escherichia coli (strain K12).